A 211-amino-acid chain; its full sequence is Degradation in the endoplasmic reticulum protein 1 (211 aa).

An N-acetylmethionine modification is found at Met1. Over 1–14 the chain is Cytoplasmic; the sequence is MDAVILNLLGDIPL. Residues 15-32 traverse the membrane as a helical segment; that stretch reads VTRLWTIGCLVLSGLTSL. Over 33-67 the chain is Lumenal; that stretch reads RIVDPGKVVYSYDLVFKKGQYGRLLYSIFDYGAFN. The helical transmembrane segment at 68–85 threads the bilayer; it reads WISMINIFVSANHLSTLE. The Cytoplasmic segment spans residues 86–92; sequence NSFNLRR. A helical transmembrane segment spans residues 93-109; the sequence is KFCWIIFLLLVILVKMT. Topologically, residues 110 to 117 are lumenal; it reads SIEQPAAS. A helical membrane pass occupies residues 118 to 133; it reads LGVLLHENLVYYELKK. The Cytoplasmic portion of the chain corresponds to 134-149; that stretch reads NGNQMNVRFFGAIDVS. The helical transmembrane segment at 150 to 165 threads the bilayer; that stretch reads PSIFPIYMNAVMYFVY. Residues 166 to 168 are Lumenal-facing; that stretch reads KRS. Residues 169–189 traverse the membrane as a helical segment; the sequence is WLEIAMNFMPGHVIYYMDDII. The Cytoplasmic portion of the chain corresponds to 190–211; that stretch reads GKIYGIDLCKSPYDWFRNTETP.

This sequence belongs to the derlin family. In terms of assembly, component of the HRD1 ubiquitin ligase complex which contains the E3 ligase HRD1, its cofactors HRD3, USA1 and DER1, substrate recruiting factor YOS9 and CDC48-binding protein UBX2. Within the complex, interacts with USA1 (via C-terminus). In ERAD-L, HRD3 and YOS9 jointly bind misfolded glycoproteins in the endoplasmic reticulum (ER) lumen. Movement of ERAD-L substrates through the ER membrane is facilitated by HRD1 and DER1 which have lateral gates facing each other and which distort the membrane region between the lateral gates, making it much thinner than a normal phospholipid bilayer. Substrates insert into the membrane as a hairpin loop with one strand interacting with DER1 and the other with HRD1. The HRD1 complex interacts with the heterotrimeric CDC48-NPL4-UFD1 ATPase complex which is recruited by UBX2 via its interaction with CDC48 and which moves ubiquitinated substrates to the cytosol for targeting to the proteasome. Post-translationally, N-terminally acetylated by acetyltransferase NatB which enhances DER1 stability and is required for ERAD-L function.

The protein resides in the endoplasmic reticulum membrane. Functionally, component of the endoplasmic reticulum-associated degradation (ERAD) pathway. Specifically required for the ERAD-L pathway which mediates the degradation of proteins with misfolded lumenal domains within the endoplasmic reticulum (ER). Facilitates retrotranslocation of misfolded proteins from the ER lumen through the ER membrane in conjunction with HRD1. Both proteins have lateral gates facing each other and distort the membrane region between the lateral gates, making it much thinner than a normal phospholipid bilayer. Substrates insert into the membrane as a hairpin loop with one strand interacting with DER1 and the other with HRD1. The sequence is that of Degradation in the endoplasmic reticulum protein 1 (DER1) from Saccharomyces cerevisiae (strain ATCC 204508 / S288c) (Baker's yeast).